Reading from the N-terminus, the 991-residue chain is Valine--tRNA ligase (991 aa).

The 'HIGH' region motif lies at 43 to 53 (PNVTGTLHMGH). The short motif at 582–586 (KMSKS) is the 'KMSKS' region element. Position 585 (K585) interacts with ATP. The interval 689 to 711 (AHSPAQHQAGQDGQDAPRTPQPR) is disordered. A compositionally biased stretch (low complexity) spans 693 to 704 (AQHQAGQDGQDA). The stretch at 925–988 (LIDVDAERAR…TQLNGLRERR (64 aa)) forms a coiled coil.

The protein belongs to the class-I aminoacyl-tRNA synthetase family. ValS type 1 subfamily. As to quaternary structure, monomer.

The protein localises to the cytoplasm. It carries out the reaction tRNA(Val) + L-valine + ATP = L-valyl-tRNA(Val) + AMP + diphosphate. Functionally, catalyzes the attachment of valine to tRNA(Val). As ValRS can inadvertently accommodate and process structurally similar amino acids such as threonine, to avoid such errors, it has a 'posttransfer' editing activity that hydrolyzes mischarged Thr-tRNA(Val) in a tRNA-dependent manner. This is Valine--tRNA ligase from Xylella fastidiosa (strain M12).